We begin with the raw amino-acid sequence, 135 residues long: Histone H3 (135 aa).

The segment at 1–40 (MARTKQTARKSTGGKAPRKAVATKARKTAPPVGGVKKPHR) is disordered. The segment covering 19–31 (KAVATKARKTAPP) has biased composition (low complexity).

The protein belongs to the histone H3 family. As to quaternary structure, the nucleosome is a histone octamer containing two molecules each of H2A, H2B, H3 and H4 assembled in one H3-H4 heterotetramer and two H2A-H2B heterodimers. The octamer wraps approximately 147 bp of DNA.

Its subcellular location is the nucleus. It localises to the chromosome. Functionally, core component of nucleosome. Nucleosomes wrap and compact DNA into chromatin, limiting DNA accessibility to the cellular machineries which require DNA as a template. Histones thereby play a central role in transcription regulation, DNA repair, DNA replication and chromosomal stability. DNA accessibility is regulated via a complex set of post-translational modifications of histones, also called histone code, and nucleosome remodeling. The sequence is that of Histone H3 from Mastigamoeba balamuthi (Phreatamoeba balamuthi).